The primary structure comprises 118 residues: Myotrophin (118 aa).

C2 bears the N-acetylcysteine mark. One copy of the ANK 1 repeat lies at 2-30; it reads CDKEFMWALKNGDLDEVKDYVAKGEDVNR. Residues K4, K11, and K24 each carry the N6-acetyllysine modification. A Phosphothreonine modification is found at T31. ANK repeat units follow at residues 34–66 and 67–99; these read GGRKPLHYAADCGQLEILEFLLLKGADINAPDK and HHITPLLSAVYEGHVSCVKLLLSKGADKTVKGP.

It belongs to the myotrophin family. As to quaternary structure, interacts with the heterodimer formed by CAPZA1 and CAPZB. Interacts with RELA.

It localises to the cytoplasm. The protein resides in the nucleus. It is found in the perinuclear region. Its function is as follows. Plays a role in the regulation of the growth of actin filaments. Inhibits the activity of the F-actin-capping protein complex formed by the CAPZA1 and CAPZB heterodimer. Promotes dimerization of NF-kappa-B subunits and regulates NF-kappa-B transcription factor activity. Promotes growth of cardiomyocytes, but not cardiomyocyte proliferation. Promotes cardiac muscle hypertrophy. In Rattus norvegicus (Rat), this protein is Myotrophin (Mtpn).